The following is a 240-amino-acid chain: MVKIRSRRFKILQSQISVEKMCEPIEAINLLKSGPKAKFSETFEVHCCLDLNTKYSDQQLRASVVLPKGTGKRTKIAVITNEAEVNKIKNFGVDIVGSKDLVESIANGFLEFDQLLTTPDMMPVIAKVGKILGPRGLMPSPKSGSVTSDIYNAIQEFKKGKLEYRTDKSGIVHSIIGKIDFTAEDLLNNLIAIKKSIDQNRPNGAKGKYWKNMYLCTTMSPAIKIDFNKLQELEKNYGQN.

Belongs to the universal ribosomal protein uL1 family. Part of the 50S ribosomal subunit.

The protein localises to the plastid. It is found in the chloroplast. In terms of biological role, binds directly to 23S rRNA. Might be involved in E site tRNA release (Potential). The chain is Large ribosomal subunit protein uL1c (rpl1) from Cyanidium caldarium (Red alga).